The chain runs to 402 residues: Leucine aminopeptidase 1 (402 aa).

The signal sequence occupies residues 1 to 18 (MKISNASLLALLLPAASA). A propeptide spanning residues 19–92 (RFVEQAEQNR…GTFNKRPYKK (74 aa)) is cleaved from the precursor. Residues N111 and N184 are each glycosylated (N-linked (GlcNAc...) asparagine). The Zn(2+) site is built by H192, D211, E250, and D277. N304 carries N-linked (GlcNAc...) asparagine glycosylation. A disulfide bridge connects residues C326 and C330. H359 is a binding site for Zn(2+).

Belongs to the peptidase M28 family. M28E subfamily. As to quaternary structure, monomer. The cofactor is Zn(2+).

It is found in the secreted. In terms of biological role, extracellular aminopeptidase that allows assimilation of proteinaceous substrates. This is Leucine aminopeptidase 1 (lap1) from Neurospora crassa (strain ATCC 24698 / 74-OR23-1A / CBS 708.71 / DSM 1257 / FGSC 987).